The sequence spans 324 residues: Aldo-keto reductase family 1 member A1-A (324 aa).

Residues 10 to 19 (GQRMPTVGLG), Thr-20, Trp-21, and Asp-44 each bind NADP(+). Tyr-49 serves as the catalytic Proton donor. NADP(+) is bound by residues Ser-161, Asn-162, Ser-210, Leu-212, Ser-214, Lys-262, Ser-263, Val-264, Thr-265, Arg-268, Gln-271, and Asn-272.

This sequence belongs to the aldo/keto reductase family.

It is found in the cytoplasm. The protein resides in the cytosol. The protein localises to the apical cell membrane. It catalyses the reaction a primary alcohol + NADP(+) = an aldehyde + NADPH + H(+). The enzyme catalyses S-nitroso-CoA + NADPH + H(+) = sulfinamide-CoA + NADP(+). It carries out the reaction S-nitrosoglutathione + NADPH + H(+) = S-(hydroxysulfenamide)glutathione + NADP(+). Catalyzes the NADPH-dependent reduction of a wide variety of carbonyl-containing compounds to their corresponding alcohols. Displays enzymatic activity towards endogenous metabolites such as aromatic and aliphatic aldehydes, ketones, monosaccharides and bile acids. Acts as an aldehyde-detoxification enzyme. Also acts as an inhibitor of protein S-nitrosylation by mediating degradation of S-nitroso-coenzyme A (S-nitroso-CoA), a cofactor required to S-nitrosylate proteins. Also acts as a S-nitroso-glutathione reductase by catalyzing the NADPH-dependent reduction of S-nitrosoglutathione. Displays no reductase activity towards retinoids. This is Aldo-keto reductase family 1 member A1-A (akr1a1a) from Danio rerio (Zebrafish).